The chain runs to 30 residues: Cytochrome c3, 50 kDa (30 aa).

As to quaternary structure, monomer. Binds 4 heme groups per subunit.

It is found in the periplasm. In terms of biological role, participates in sulfate respiration coupled with phosphorylation by transferring electrons from the enzyme dehydrogenase to ferredoxin. The polypeptide is Cytochrome c3, 50 kDa (Desulfuromonas acetoxidans (Chloropseudomonas ethylica)).